Here is a 91-residue protein sequence, read N- to C-terminus: Bacterial microcompartment shell protein PduJ (91 aa).

Residues 4 to 88 enclose the BMC domain; it reads ALGLVETKGL…PHSDVEAILP (85 aa).

The protein belongs to the bacterial microcompartments protein family. Homohexamer with a central pore. Interacts with PduP, which targets PduP to the BMC. Interacts with shell protein PduA.

The protein localises to the bacterial microcompartment. The protein operates within polyol metabolism; 1,2-propanediol degradation. Functionally, one of the major shell proteins of the bacterial microcompartment (BMC) dedicated to 1,2-propanediol (1,2-PD) degradation. At least one of PduA or PduJ is required for BMC assembly; it must be encoded as the first gene in the pdu operon. Required for structural integrity of BMCs and to mitigate propionaldehyde toxicity, probably joins facets responsible for BMC closure. Probably the hub for binding multiple enzymes to the interior of the BMC. Its function is as follows. Expression of a cosmid containing the full 21-gene pdu operon in E.coli allows E.coli to grow on 1,2-PD with the appearance of BMCs in its cytoplasm. Overexpression of this protein leads to an internal structure with a whorled architecture. In terms of biological role, the 1,2-PD-specific bacterial microcompartment (BMC) concentrates low levels of 1,2-PD catabolic enzymes, concentrates volatile reaction intermediates thus enhancing pathway flux and keeps the level of toxic, mutagenic propionaldehyde low. The sequence is that of Bacterial microcompartment shell protein PduJ from Citrobacter freundii.